The primary structure comprises 90 residues: Probable Fe(2+)-trafficking protein (90 aa).

This sequence belongs to the Fe(2+)-trafficking protein family.

Functionally, could be a mediator in iron transactions between iron acquisition and iron-requiring processes, such as synthesis and/or repair of Fe-S clusters in biosynthetic enzymes. This is Probable Fe(2+)-trafficking protein from Xylella fastidiosa (strain 9a5c).